The primary structure comprises 405 residues: DNA primase DnaG (405 aa).

Positions 172-248 constitute a Toprim domain; it reads DAIIIVEGRA…HVDYIARAPP (77 aa). Mg(2+)-binding residues include glutamate 178, aspartate 222, and aspartate 224. Residues 279-303 form a disordered region; the sequence is ASGERAEAPPQPAQQPQQEQPAPQR. Positions 292–303 are enriched in low complexity; it reads QQPQQEQPAPQR.

Belongs to the archaeal DnaG primase family. Forms a ternary complex with MCM helicase and DNA. Component of the archaeal exosome complex. The cofactor is Mg(2+).

It carries out the reaction ssDNA + n NTP = ssDNA/pppN(pN)n-1 hybrid + (n-1) diphosphate.. Its function is as follows. RNA polymerase that catalyzes the synthesis of short RNA molecules used as primers for DNA polymerase during DNA replication. Also part of the exosome, which is a complex involved in RNA degradation. Acts as a poly(A)-binding protein that enhances the interaction between heteromeric, adenine-rich transcripts and the exosome. In Pyrobaculum arsenaticum (strain DSM 13514 / JCM 11321 / PZ6), this protein is DNA primase DnaG.